The primary structure comprises 39 residues: Photosystem II reaction center protein L (39 aa).

The chain crosses the membrane as a helical span at residues 18–38 (SLYLGLLIVFTTGILFSSYFF).

This sequence belongs to the PsbL family. In terms of assembly, PSII is composed of 1 copy each of membrane proteins PsbA, PsbB, PsbC, PsbD, PsbE, PsbF, PsbH, PsbI, PsbJ, PsbK, PsbL, PsbM, PsbT, PsbX, PsbY, PsbZ, Psb30/Ycf12, peripheral proteins PsbO, CyanoQ (PsbQ), PsbU, PsbV and a large number of cofactors. It forms dimeric complexes.

Its subcellular location is the cellular thylakoid membrane. Functionally, one of the components of the core complex of photosystem II (PSII). PSII is a light-driven water:plastoquinone oxidoreductase that uses light energy to abstract electrons from H(2)O, generating O(2) and a proton gradient subsequently used for ATP formation. It consists of a core antenna complex that captures photons, and an electron transfer chain that converts photonic excitation into a charge separation. This subunit is found at the monomer-monomer interface and is required for correct PSII assembly and/or dimerization. This chain is Photosystem II reaction center protein L, found in Synechococcus sp. (strain CC9311).